The sequence spans 1255 residues: Membrane-associated guanylate kinase, WW and PDZ domain-containing protein 1 (1255 aa).

One can recognise a PDZ 1 domain in the interval 17–105; it reads ECTVKRGPQG…AVTFKAVRQG (89 aa). In terms of domain architecture, Guanylate kinase-like spans 96–287; the sequence is AVTFKAVRQG…APITDPSQKF (192 aa). An ATP-binding site is contributed by 103–110; it reads RQGGRLNK. Disordered regions lie at residues 208 to 227 and 235 to 265; these read HSLQSGSKQSTPKRTKSYND and HTENEEEEDVPEMNSSFTADSGDQDEPTLQE. One can recognise a WW 1 domain in the interval 300–333; it reads GPLPENWEMAYTENGEVYFIDHNAKTTSWLDPRC. S357 is subject to Phosphoserine. The WW 2 domain occupies 359–392; the sequence is LELPAGWEKIEDPVYGVYYVDHINRKTQYENPVL. Residues 395–462 are disordered; it reads KRKRQLEQQQ…QGKPFFTRNP (68 aa). Residues 402-414 show a composition bias toward low complexity; it reads QQQQQQQHQQQPQ. Residues 434-444 are compositionally biased toward pro residues; the sequence is PVAPSHPPSNP. One can recognise a PDZ 2 domain in the interval 471-553; the sequence is HTKLRKSSRG…GASVDLELCR (83 aa). Positions 585 to 601 are enriched in polar residues; sequence QETYDSPASHSSKTGKV. Disordered stretches follow at residues 585–622 and 719–820; these read QETYDSPASHSSKTGKVSNMKDARPSSPADVASNSSHG and QRGG…GERD. Residues 642–720 form the PDZ 3 domain; it reads TVHIVKGPMG…GSEVTLLVQR (79 aa). Phosphoserine occurs at positions 729 and 740. A compositionally biased stretch (low complexity) spans 741 to 755; it reads QNSSQHSVSSLRSLH. Phosphoserine is present on S799. Positions 840–922 constitute a PDZ 4 domain; that stretch reads DIFLWRKETG…QGHVNLTVRR (83 aa). Residues 932 to 984 are disordered; it reads ENEVPSPASSHHSSNQPASLTEEKRTPQGSQNSLNTVSSGSGSTSGIGSGGGG. Composition is skewed to polar residues over residues 938-950 and 958-967; these read PASSHHSSNQPAS and PQGSQNSLNT. Over residues 974-984 the composition is skewed to gly residues; sequence STSGIGSGGGG. The region spanning 997 to 1093 is the PDZ 5 domain; it reads DVEIRRGENE…TVTLRIIPGD (97 aa). The residue at position 1070 (S1070) is a Phosphoserine. A compositionally biased stretch (polar residues) spans 1111-1129; that stretch reads TTTHAPSQQGTQETRTTTK. The disordered stretch occupies residues 1111 to 1142; sequence TTTHAPSQQGTQETRTTTKPKPDSQFEFKGPQ. The region spanning 1151 to 1233 is the PDZ 6 domain; the sequence is TVELERGAKG…RVRLFLRRGD (83 aa).

Part of a complex composed of AMOTL2, MAGI1 and CDH5, within the complex AMOTL2 acts as a scaffold protein for the interaction of MAGI1 with CDH5. The complex is required for coupling actin fibers to cell junctions in endothelial cells. Interacts through its WW 2 domain with SYNPO and through its PDZ 5 domain with ACTN4. Interacts with cytoplasmic domain of ADGRB1. Interacts via its WW domains with DRPLA. Interacts with ESAM, LRP2 and CXADR. May interact with CTNNB1. Interacts through its PDZ 1 domain with NET1. Interacts with ASIC3 and AMOT. Interacts with FCHSD2. Interacts with IGSF5/JAM4 and through its PDZ 2 and 3 domains with NPHS1 forming a tripartite complex. Interacts with DDN. May interact (via PDZ domain) with RAPGEF2. Interacts with DLL1. Interacts with KCNJ10 and possibly with KCNJ10/KCNJ16 heterodimer; this interaction may facilitate KCNJ10/KCNJ16 potassium channel expression at the basolateral membrane in kidney tubular cells. Interacts with PRRG4 (via cytoplasmic domain).

It is found in the cell junction. Its subcellular location is the tight junction. It localises to the cytoplasm. The protein resides in the membrane. Plays a role in coupling actin fibers to cell junctions in endothelial cells, via its interaction with AMOTL2 and CDH5. May regulate acid-induced ASIC3 currents by modulating its expression at the cell surface. In Rattus norvegicus (Rat), this protein is Membrane-associated guanylate kinase, WW and PDZ domain-containing protein 1 (Magi1).